Reading from the N-terminus, the 247-residue chain is DNA repair protein RecO (247 aa).

This sequence belongs to the RecO family.

In terms of biological role, involved in DNA repair and RecF pathway recombination. The sequence is that of DNA repair protein RecO from Caldanaerobacter subterraneus subsp. tengcongensis (strain DSM 15242 / JCM 11007 / NBRC 100824 / MB4) (Thermoanaerobacter tengcongensis).